The chain runs to 369 residues: Chaperone protein DnaJ (369 aa).

Positions 7-73 constitute a J domain; that stretch reads DYYEILGVPR…QKRAMYDRFG (67 aa). Residues 143–225 form a CR-type zinc finger; it reads GAEIPVEYER…CGGSGRVLRK (83 aa). Zn(2+) is bound by residues C156, C159, C173, C176, C199, C202, C213, and C216. CXXCXGXG motif repeat units follow at residues 156 to 163, 173 to 180, 199 to 206, and 213 to 220; these read CPRCGGTG, CPSCGGTG, CERCGGTG, and CHECGGSG.

It belongs to the DnaJ family. Homodimer. Zn(2+) is required as a cofactor.

The protein resides in the cytoplasm. Its function is as follows. Participates actively in the response to hyperosmotic and heat shock by preventing the aggregation of stress-denatured proteins and by disaggregating proteins, also in an autonomous, DnaK-independent fashion. Unfolded proteins bind initially to DnaJ; upon interaction with the DnaJ-bound protein, DnaK hydrolyzes its bound ATP, resulting in the formation of a stable complex. GrpE releases ADP from DnaK; ATP binding to DnaK triggers the release of the substrate protein, thus completing the reaction cycle. Several rounds of ATP-dependent interactions between DnaJ, DnaK and GrpE are required for fully efficient folding. Also involved, together with DnaK and GrpE, in the DNA replication of plasmids through activation of initiation proteins. The polypeptide is Chaperone protein DnaJ (Thermotoga maritima (strain ATCC 43589 / DSM 3109 / JCM 10099 / NBRC 100826 / MSB8)).